We begin with the raw amino-acid sequence, 424 residues long: MKSYFCVTPSGWQETQTRPRIVPKHSEKCSRTYSRPRSSLSDSEGRCVVLPRDGGGRKRKSNGSQGRCSNNPGRPSRKWTEKTIAASRQGFFSKRDNGYWVPKSPEKKYVPKVFPRNMDNKKSFKDVLTSPAKIQIKPTPESILLAQKIQNSTFKSRGKVTLSQFSLPLINRFQEIQLTTHLEPVEESTPFGVNDQRAQHLFCKKVPRKIGRNTVLVCPITGTESHIDAKRGISARIVDSMASVVHTENLPAYERGHVVTKNVSRTKRVCTPVPIIGTFSDRAIRVECDDHTDELASASSVPSIWKPSKKQHAVPISSSNEMGSAVGTKPDWYTPVKTCTHRQYQKVQRVFLDAMNIMRTLRFHTGPQELRETWVKCWLQVHKKNVAFPGWMITPLLSGTVPCEQEFFLPKAGETRGFATVCYA.

The disordered stretch occupies residues 15-78 (TQTRPRIVPK…SNNPGRPSRK (64 aa)). Composition is skewed to polar residues over residues 31 to 42 (RTYSRPRSSLSD) and 62 to 73 (NGSQGRCSNNPG).

Belongs to the nepovirus satellite RNA 48 kDa protein family.

This Allium porrum (Leek) protein is Satellite RNA 48 kDa protein.